The chain runs to 148 residues: Azurin (148 aa).

The first 18 residues, 1–18 (MRNQLLFALAFIPTIAAA), serve as a signal peptide directing secretion. A Plastocyanin-like domain is found at 19 to 148 (ASNCEVNVSA…MMRGTVKLVD (130 aa)). Cys22 and Cys45 are disulfide-bonded. Cu cation contacts are provided by His65, Cys131, His136, and Met140.

Its subcellular location is the periplasm. It participates in one-carbon metabolism; methylamine degradation. Functionally, probable electron acceptor for methylamine dehydrogenase. The protein is Azurin (azu) of Methylobacillus flagellatus (strain ATCC 51484 / DSM 6875 / VKM B-1610 / KT).